The sequence spans 360 residues: Peptide chain release factor 1 (360 aa).

An N5-methylglutamine modification is found at Gln237.

The protein belongs to the prokaryotic/mitochondrial release factor family. Post-translationally, methylated by PrmC. Methylation increases the termination efficiency of RF1.

The protein resides in the cytoplasm. Peptide chain release factor 1 directs the termination of translation in response to the peptide chain termination codons UAG and UAA. In Pseudomonas putida (strain W619), this protein is Peptide chain release factor 1.